Reading from the N-terminus, the 251-residue chain is Ly6/PLAUR domain-containing protein 5 (251 aa).

Positions 1–25 (MAMGVPRVILLCLFGAALCLTGSQA) are cleaved as a signal peptide. 2 N-linked (GlcNAc...) asparagine glycosylation sites follow: Asn-120 and Asn-174. The 80-residue stretch at 135-214 (CYACIGVHQD…GSCCEGYLCN (80 aa)) folds into the UPAR/Ly6 domain. A lipid anchor (GPI-anchor amidated alanine) is attached at Ala-225. Positions 226–251 (SATTPPRALQVLALLLPVLLLVGLSA) are cleaved as a propeptide — removed in mature form.

It is found in the cell membrane. This Homo sapiens (Human) protein is Ly6/PLAUR domain-containing protein 5 (LYPD5).